Here is a 195-residue protein sequence, read N- to C-terminus: Phosphoheptose isomerase (195 aa).

The SIS domain occupies 36-195 (LAHCLLSDGK…DLVDHQLFGE (160 aa)). 51 to 53 (NGG) serves as a coordination point for substrate. Zn(2+) contacts are provided by His60 and Glu64. Substrate-binding positions include Glu64, 93–94 (ND), 119–121 (STS), Ser124, and Gln174. 2 residues coordinate Zn(2+): Gln174 and His182.

This sequence belongs to the SIS family. GmhA subfamily. In terms of assembly, homotetramer. Zn(2+) serves as cofactor.

The protein resides in the cytoplasm. The catalysed reaction is 2 D-sedoheptulose 7-phosphate = D-glycero-alpha-D-manno-heptose 7-phosphate + D-glycero-beta-D-manno-heptose 7-phosphate. It participates in carbohydrate biosynthesis; D-glycero-D-manno-heptose 7-phosphate biosynthesis; D-glycero-alpha-D-manno-heptose 7-phosphate and D-glycero-beta-D-manno-heptose 7-phosphate from sedoheptulose 7-phosphate: step 1/1. Functionally, catalyzes the isomerization of sedoheptulose 7-phosphate in D-glycero-D-manno-heptose 7-phosphate. The sequence is that of Phosphoheptose isomerase from Methylococcus capsulatus (strain ATCC 33009 / NCIMB 11132 / Bath).